The chain runs to 454 residues: GTPase Obg (454 aa).

An Obg domain is found at 2 to 159; that stretch reads SDFVDEAVLH…VDIRLELKTI (158 aa). Residues 60–87 are disordered; the sequence is YQRRPHRKAENGAPGQGSNRSGASGADL. Residues 160-335 form the OBG-type G domain; it reads ADVGLVGFPS…LAYALGEQVA (176 aa). GTP contacts are provided by residues 166–173, 191–195, 212–215, 287–290, and 316–318; these read GFPSAGKS, FTTLV, DVPG, NKID, and SAA. 2 residues coordinate Mg(2+): serine 173 and threonine 193. An OCT domain is found at 353 to 435; it reads PREIGEIPFQ…DNPVVFDWDP (83 aa).

The protein belongs to the TRAFAC class OBG-HflX-like GTPase superfamily. OBG GTPase family. As to quaternary structure, monomer. The cofactor is Mg(2+).

It is found in the cytoplasm. Functionally, an essential GTPase which binds GTP, GDP and possibly (p)ppGpp with moderate affinity, with high nucleotide exchange rates and a fairly low GTP hydrolysis rate. Plays a role in control of the cell cycle, stress response, ribosome biogenesis and in those bacteria that undergo differentiation, in morphogenesis control. This chain is GTPase Obg, found in Thermobifida fusca (strain YX).